The chain runs to 390 residues: Isotocin receptor (390 aa).

Residues 1–48 (MEEMFKEQDFWSFNESSRNSTVGNETFGGNQTVNPLKRNEEVAKVEVT) lie on the Extracellular side of the membrane. N-linked (GlcNAc...) asparagine glycans are attached at residues N14, N19, N24, and N30. A helical membrane pass occupies residues 49-69 (VLALVLFLALAGNLCVLIAIY). The Cytoplasmic portion of the chain corresponds to 70–86 (TAKHTQSRMYYLMKHLS). A helical transmembrane segment spans residues 87 to 107 (IADLVVAVFQVLPQLIWDITF). At 108–124 (RFYGPDFLCRLVKYLQT) the chain is on the extracellular side. A disulfide bond links C116 and C191. The chain crosses the membrane as a helical span at residues 125 to 145 (VGMFASTYMLVLMSIDRCIAI). Over 146–160 (CQPLRSLHKRKDRCY) the chain is Cytoplasmic. Residues 161-181 (VIVSWALSLVFSVPQVYIFSL) form a helical membrane-spanning segment. The Extracellular segment spans residues 182–206 (REIGNGVYDCWGDFVQPWGAKAYIT). Residues 207–227 (WISLTIYIIPVAILGGCYGLI) form a helical membrane-spanning segment. The Cytoplasmic segment spans residues 228–276 (SFKIWQNFKRKTKKDQCITLTTAASKANALARVSSVKLVSKAKITTVKM). Residues 277–297 (TFVIVLAYIVCWTPFFFVQMW) traverse the membrane as a helical segment. Over 298 to 311 (SAWDPEAPREAMPF) the chain is Extracellular. A helical transmembrane segment spans residues 312–332 (IISMLLASLNSCCNPWIYMFF). Topologically, residues 333–390 (AGHLFHDLKQSLLCCSTLYLKSSQCRCDQEHDSRKSNCSTYVIKSTSSQRSITQSSIT) are cytoplasmic.

The protein belongs to the G-protein coupled receptor 1 family. Vasopressin/oxytocin receptor subfamily. Expressed in brain, intestine, bladder, skeletal muscle, lateral line, gills and kidney.

The protein resides in the cell membrane. Functionally, binds to isotocin. Can also be activated by vasotocin, mesotocin, oxytocin and Arg-vasopressin, although these have lower potencies than isotocin. Produces an induction of membrane chloride currents indicating that it is coupled to the inositol phosphate/calcium pathway. This is Isotocin receptor from Catostomus commersonii (White sucker).